The chain runs to 220 residues: Probable acrEF/envCD operon repressor (220 aa).

An HTH tetR-type domain is found at Leu10–Arg70. Positions Thr33–Phe52 form a DNA-binding region, H-T-H motif.

Its function is as follows. Potential regulator protein for the acrEF/envCD genes. This is Probable acrEF/envCD operon repressor (envR) from Escherichia coli O157:H7.